Reading from the N-terminus, the 79-residue chain is UPF0154 protein SAG1601 (79 aa).

The chain crosses the membrane as a helical span at residues 5–25 (IWILLIIVALFGGLVGGIFIA).

Belongs to the UPF0154 family.

The protein localises to the membrane. This Streptococcus agalactiae serotype V (strain ATCC BAA-611 / 2603 V/R) protein is UPF0154 protein SAG1601.